Here is a 78-residue protein sequence, read N- to C-terminus: Molt-inhibiting hormone (78 aa).

3 disulfide bridges follow: C7–C44, C24–C40, and C27–C53.

Its subcellular location is the secreted. In terms of biological role, inhibits Y-organs where molting hormone (ecdysteroid) is secreted. A molting cycle is initiated when MIH secretion diminishes or stops. Also has significant hyperglycemic hormone (CHH) activity. In Cancer pagurus (Rock crab), this protein is Molt-inhibiting hormone.